Reading from the N-terminus, the 641-residue chain is SH2 domain-containing protein A (641 aa).

Positions 355–384 are disordered; the sequence is VNGNGTSMEWRPQNHEEDNSSTDSENTEMR. In terms of domain architecture, SH2 spans 547-641; that stretch reads WIEGFVTKEE…SRLGRIIRGI (95 aa).

In terms of processing, phosphorylated on tyrosine residues. Expressed in roots, leaves, stems and flowers.

The polypeptide is SH2 domain-containing protein A (Arabidopsis thaliana (Mouse-ear cress)).